The primary structure comprises 587 residues: Ankyrin repeat and SOCS box protein 14 (587 aa).

ANK repeat units lie at residues 82-112 (IGWI…SLWE), 117-146 (NGET…NPNA), 150-179 (EGNS…DVNL), 183-212 (NERT…HPDP), 216-245 (YGFT…IFCL), 248-277 (DSSS…DANI), 281-310 (SGHL…LAAI), 313-342 (SGIS…DVNF), 355-384 (HRKS…LPNQ), 385-414 (DPVN…NVNY), and 416-449 (CRVN…DTER). Positions 521–576 (WSEIHFILTNPRSLKHLCRLKIRKCMGRLHLRCPVFMSFLPLPNRLKAYVLYKEYD) constitute an SOCS box domain.

It belongs to the ankyrin SOCS box (ASB) family. As to quaternary structure, interacts with MAPRE2; this interaction promotes MAPRE2 degradation.

Its pathway is protein modification; protein ubiquitination. In terms of biological role, may be a substrate-recognition component of a SCF-like ECS (Elongin-Cullin-SOCS-box protein) E3 ubiquitin-protein ligase complex which mediates the ubiquitination and subsequent proteasomal degradation of target proteins. Plays a role in the inhibition of cardiomyocyte nuclear proliferation by mediating the ubiquitination and degradation of MAPRE2. This chain is Ankyrin repeat and SOCS box protein 14 (ASB14), found in Homo sapiens (Human).